Here is a 124-residue protein sequence, read N- to C-terminus: S-adenosylmethionine decarboxylase proenzyme (124 aa).

Ser63 functions as the Schiff-base intermediate with substrate; via pyruvic acid in the catalytic mechanism. Position 63 is a pyruvic acid (Ser); by autocatalysis (Ser63). His68 acts as the Proton acceptor; for processing activity in catalysis. Catalysis depends on Cys83, which acts as the Proton donor; for catalytic activity.

This sequence belongs to the prokaryotic AdoMetDC family. Type 1 subfamily. Heterotetramer of two alpha and two beta chains arranged as a dimer of alpha/beta heterodimers. Pyruvate is required as a cofactor. In terms of processing, is synthesized initially as an inactive proenzyme. Formation of the active enzyme involves a self-maturation process in which the active site pyruvoyl group is generated from an internal serine residue via an autocatalytic post-translational modification. Two non-identical subunits are generated from the proenzyme in this reaction, and the pyruvate is formed at the N-terminus of the alpha chain, which is derived from the carboxyl end of the proenzyme. The post-translation cleavage follows an unusual pathway, termed non-hydrolytic serinolysis, in which the side chain hydroxyl group of the serine supplies its oxygen atom to form the C-terminus of the beta chain, while the remainder of the serine residue undergoes an oxidative deamination to produce ammonia and the pyruvoyl group blocking the N-terminus of the alpha chain.

The enzyme catalyses S-adenosyl-L-methionine + H(+) = S-adenosyl 3-(methylsulfanyl)propylamine + CO2. The protein operates within amine and polyamine biosynthesis; S-adenosylmethioninamine biosynthesis; S-adenosylmethioninamine from S-adenosyl-L-methionine: step 1/1. In terms of biological role, catalyzes the decarboxylation of S-adenosylmethionine to S-adenosylmethioninamine (dcAdoMet), the propylamine donor required for the synthesis of the polyamines spermine and spermidine from the diamine putrescine. The protein is S-adenosylmethionine decarboxylase proenzyme of Geobacillus kaustophilus (strain HTA426).